A 166-amino-acid chain; its full sequence is Mitochondrial translation release factor in rescue (166 aa).

The N-terminal 35 residues, 1 to 35 (MSTVGLFHFPTPLTRICPAPWGLRLWEKLTLLSPG), are a transit peptide targeting the mitochondrion. The interval 57-121 (ENELEEQFVK…LQEKVDVFYN (65 aa)) is GGQ domain. The short motif at 71-73 (GGQ) is the GGQ element. Q73 carries the N5-methylglutamine modification. Residues 122 to 148 (GENSPVHKEKREAAKKKQERKKRAKET) form a disordered region. Residues 126-137 (PVHKEKREAAKK) are compositionally biased toward basic and acidic residues. Residues 127-160 (VHKEKREAAKKKQERKKRAKETLEKKKLLKELWE) are a coiled coil.

Belongs to the prokaryotic/mitochondrial release factor family. As to quaternary structure, interacts (via C-terminus) with MTRES1 (via S4 domain). Associates with mitoribosomal S39 large subunit, peptidyl tRNA and nascent chain. In terms of processing, methylation of glutamine in the GGQ triplet by HEMK1. In terms of tissue distribution, expressed in all areas of the brain tested.

It localises to the mitochondrion. Part of a mitoribosome-associated quality control pathway that prevents aberrant translation by responding to interruptions during elongation. As heterodimer with MTRES1, ejects the unfinished nascent chain and peptidyl transfer RNA (tRNA), respectively, from stalled ribosomes. Recruitment of mitoribosome biogenesis factors to these quality control intermediates suggests additional roles for MTRES1 and MTRF during mitoribosome rescue. The protein is Mitochondrial translation release factor in rescue of Homo sapiens (Human).